Here is a 511-residue protein sequence, read N- to C-terminus: Maturase K (511 aa).

The protein belongs to the intron maturase 2 family. MatK subfamily.

Its subcellular location is the plastid. It is found in the chloroplast. In terms of biological role, usually encoded in the trnK tRNA gene intron. Probably assists in splicing its own and other chloroplast group II introns. This Hordeum vulgare (Barley) protein is Maturase K.